The primary structure comprises 501 residues: Aldehyde dehydrogenase 1A1 (501 aa).

Ser-2 bears the N-acetylserine mark. An N6-acetyllysine mark is found at Lys-91 and Lys-128. NAD(+)-binding positions include 167-170 (IPWN), 193-196 (KPAE), 226-227 (GP), and 246-247 (GS). N6-acetyllysine is present on Lys-252. The Proton acceptor role is filled by Glu-269. 269–271 (ELG) lines the NAD(+) pocket. Catalysis depends on Cys-303, which acts as the Nucleophile. Residues 336–501 (LTPGVSQGPQ…VTIKISQKNS (166 aa)) are mediates interaction with PRMT3. Position 337 is a phosphothreonine (Thr-337). 349–353 (EQYEK) contacts NAD(+). N6-acetyllysine is present on residues Lys-353 and Lys-367. Residue 400-402 (EIF) participates in NAD(+) binding. Position 410 is an N6-acetyllysine (Lys-410). The residue at position 413 (Ser-413) is a Phosphoserine. 2 positions are modified to N6-acetyllysine: Lys-419 and Lys-495.

This sequence belongs to the aldehyde dehydrogenase family. As to quaternary structure, homotetramer. Interacts with PRMT3; the interaction is direct, inhibits ALDH1A1 aldehyde dehydrogenase activity and is independent of the methyltransferase activity of PRMT3. The N-terminus is blocked most probably by acetylation.

The protein resides in the cytoplasm. Its subcellular location is the cytosol. It is found in the cell projection. The protein localises to the axon. The enzyme catalyses an aldehyde + NAD(+) + H2O = a carboxylate + NADH + 2 H(+). It carries out the reaction all-trans-retinal + NAD(+) + H2O = all-trans-retinoate + NADH + 2 H(+). It catalyses the reaction 9-cis-retinal + NAD(+) + H2O = 9-cis-retinoate + NADH + 2 H(+). The catalysed reaction is 11-cis-retinal + NAD(+) + H2O = 11-cis-retinoate + NADH + 2 H(+). The enzyme catalyses 13-cis-retinal + NAD(+) + H2O = 13-cis-retinoate + NADH + 2 H(+). It carries out the reaction 3-deoxyglucosone + NAD(+) + H2O = 2-dehydro-3-deoxy-D-gluconate + NADH + 2 H(+). It catalyses the reaction (E)-4-hydroxynon-2-enal + NAD(+) + H2O = (E)-4-hydroxynon-2-enoate + NADH + 2 H(+). The catalysed reaction is malonaldehyde + NAD(+) + H2O = 3-oxopropanoate + NADH + 2 H(+). The enzyme catalyses hexanal + NAD(+) + H2O = hexanoate + NADH + 2 H(+). It carries out the reaction propanal + NAD(+) + H2O = propanoate + NADH + 2 H(+). It catalyses the reaction acetaldehyde + NAD(+) + H2O = acetate + NADH + 2 H(+). The catalysed reaction is benzaldehyde + NAD(+) + H2O = benzoate + NADH + 2 H(+). The enzyme catalyses 4-aminobutanal + NAD(+) + H2O = 4-aminobutanoate + NADH + 2 H(+). The protein operates within cofactor metabolism; retinol metabolism. Inhibited by duocarmycin analogs. Its function is as follows. Cytosolic dehydrogenase that catalyzes the irreversible oxidation of a wide range of aldehydes to their corresponding carboxylic acid. Functions downstream of retinol dehydrogenases and catalyzes the oxidation of retinaldehyde into retinoic acid, the second step in the oxidation of retinol/vitamin A into retinoic acid. This pathway is crucial to control the levels of retinol and retinoic acid, two important molecules which excess can be teratogenic and cytotoxic. Also oxidizes aldehydes resulting from lipid peroxidation like (E)-4-hydroxynon-2-enal/HNE, malonaldehyde and hexanal that form protein adducts and are highly cytotoxic. By participating for instance to the clearance of (E)-4-hydroxynon-2-enal/HNE in the lens epithelium prevents the formation of HNE-protein adducts and lens opacification. Also functions downstream of fructosamine-3-kinase in the fructosamine degradation pathway by catalyzing the oxidation of 3-deoxyglucosone, the carbohydrate product of fructosamine 3-phosphate decomposition, which is itself a potent glycating agent that may react with lysine and arginine side-chains of proteins. Also has an aminobutyraldehyde dehydrogenase activity and is probably part of an alternative pathway for the biosynthesis of GABA/4-aminobutanoate in midbrain, thereby playing a role in GABAergic synaptic transmission. The sequence is that of Aldehyde dehydrogenase 1A1 from Ovis aries (Sheep).